Here is a 225-residue protein sequence, read N- to C-terminus: Guanylate kinase (225 aa).

Residues 20–198 form the Guanylate kinase-like domain; sequence GNLFMVVAPS…ALSELQCLVA (179 aa). ATP is bound at residue 27–34; the sequence is APSGAGKS.

The protein belongs to the guanylate kinase family.

The protein localises to the cytoplasm. The enzyme catalyses GMP + ATP = GDP + ADP. In terms of biological role, essential for recycling GMP and indirectly, cGMP. The protein is Guanylate kinase of Paraburkholderia xenovorans (strain LB400).